Here is a 295-residue protein sequence, read N- to C-terminus: MSNISSLNPFSGSSRTLVENKQVGASDAESLLKEMFSLEAQKEYAKECNLGRYTELKANRRLNHIDLVPKVHGMKMLSMFRSEYDKGNVPSSGVLNIPRILLYLVRTSHSSTVGSITIRLVDTYSASDSCLLEAIDGQEFTVDLSSLPCMIGFSPTYDCKLEMVDGRRRCFGIVTELNGVIGEGHTVAMVHAYWKAMFRTKPGNYTRVKPAAKFIAPFDRLKQLSSGQLDAFIKGISNNSIDHGYLMGSTINNIKKKTNVKEESPTSDPQSGEVSSMTQSVPGAADTRIPKPRRR.

The interval 256 to 295 (KKTNVKEESPTSDPQSGEVSSMTQSVPGAADTRIPKPRRR) is disordered. Positions 266–281 (TSDPQSGEVSSMTQSV) are enriched in polar residues.

The protein belongs to the bromovirus movement protein family.

It localises to the host cell junction. It is found in the host plasmodesma. Functionally, transports viral genome to neighboring plant cells directly through plasmosdesmata, without any budding. The movement protein allows efficient cell to cell propagation, by bypassing the host cell wall barrier. Acts by forming a tubular structure at the host plasmodesmata, enlarging it enough to allow free passage of virion capsids. The polypeptide is Movement protein (Broad bean mottle virus).